Here is a 103-residue protein sequence, read N- to C-terminus: MAAVSLSVSTVKPLGDRVFVKVSESEEKTAGGILLPDTAKEKPQVGEVVQVGPGKRNDDGSRQAPEVGVGDKVLYSKYAGTDIKLSTDEYVLLSEKDILAVVN.

It belongs to the GroES chaperonin family. In terms of assembly, heptamer of 7 subunits arranged in a ring. Interacts with the chaperonin GroEL.

It is found in the cytoplasm. In terms of biological role, together with the chaperonin GroEL, plays an essential role in assisting protein folding. The GroEL-GroES system forms a nano-cage that allows encapsulation of the non-native substrate proteins and provides a physical environment optimized to promote and accelerate protein folding. GroES binds to the apical surface of the GroEL ring, thereby capping the opening of the GroEL channel. The protein is Co-chaperonin GroES of Prochlorococcus marinus (strain MIT 9313).